The sequence spans 20 residues: M-poneritoxin-Ng1f (20 aa).

The residue at position 20 (Lys-20) is a Lysine amide.

In terms of tissue distribution, expressed by the venom gland.

Its subcellular location is the secreted. The protein resides in the target cell membrane. Has activity against Gram-positive bacteria. Has insecticidal and hemolytic activities. May act by disrupting the integrity of the bacterial cell membrane. This is M-poneritoxin-Ng1f from Neoponera goeldii (Ponerine ant).